The chain runs to 226 residues: Thymocyte nuclear protein 1 (226 aa).

A disordered region spans residues 1–38; it reads MPRPRKRQAGAAGPDKKQLSGKRTKTENSESASVKLEN. The short motif at 5 to 10 is the Nuclear localization signal element; the sequence is RKRQAG. The span at 14–28 shows a compositional bias: basic and acidic residues; that stretch reads PDKKQLSGKRTKTEN. The segment covering 29–38 has biased composition (polar residues); the sequence is SESASVKLEN.

In terms of processing, phosphorylated.

It is found in the nucleus. Specifically binds 5-hydroxymethylcytosine (5hmC), suggesting that it acts as a specific reader of 5hmC. This is Thymocyte nuclear protein 1 (Thyn1) from Rattus norvegicus (Rat).